Reading from the N-terminus, the 130-residue chain is Small ribosomal subunit protein uS9 (130 aa).

Residues 111–130 (VERKKVGLHKARRATQFSKR) form a disordered region. Residues 116-130 (VGLHKARRATQFSKR) show a composition bias toward basic residues.

The protein belongs to the universal ribosomal protein uS9 family.

The chain is Small ribosomal subunit protein uS9 from Xylella fastidiosa (strain M23).